Reading from the N-terminus, the 777-residue chain is Subtilisin-like protease SBT3.7 (777 aa).

The N-terminal stretch at 1 to 22 (MRNHRTSIFVVLSLVIILNGQS) is a signal peptide. Positions 23 to 113 (GFLPRAGAES…VIPDRFYKPA (91 aa)) are cleaved as a propeptide — activation peptide. The Inhibitor I9 domain maps to 34–111 (VHIVYLGEKQ…VHVIPDRFYK (78 aa)). Positions 117–624 (TWDYLGLSPT…GGLVNPEKAT (508 aa)) constitute a Peptidase S8 domain. N133 carries an N-linked (GlcNAc...) asparagine glycan. D147 (charge relay system) is an active-site residue. N180 and N206 each carry an N-linked (GlcNAc...) asparagine glycan. H222 (charge relay system) is an active-site residue. N-linked (GlcNAc...) asparagine glycans are attached at residues N237, N397, N412, and N540. The PA domain occupies 386 to 481 (SLVYPENPGN…ELGTYILFYI (96 aa)). The Charge relay system role is filled by S555. 3 N-linked (GlcNAc...) asparagine glycosylation sites follow: N647, N723, and N758.

The protein belongs to the peptidase S8 family.

The protein localises to the secreted. This chain is Subtilisin-like protease SBT3.7, found in Arabidopsis thaliana (Mouse-ear cress).